The chain runs to 100 residues: Small ribosomal subunit protein uS14c (100 aa).

Residues 1-31 (MARKSLIQREKKRQKLEQKYHSIRRSSKKEI) are disordered.

This sequence belongs to the universal ribosomal protein uS14 family. Part of the 30S ribosomal subunit.

It is found in the plastid. The protein localises to the chloroplast. Functionally, binds 16S rRNA, required for the assembly of 30S particles. The chain is Small ribosomal subunit protein uS14c from Solanum bulbocastanum (Wild potato).